Here is a 91-residue protein sequence, read N- to C-terminus: Small ribosomal subunit protein uS19c (91 aa).

Belongs to the universal ribosomal protein uS19 family.

It localises to the plastid. The protein localises to the organellar chromatophore. Its function is as follows. Protein S19 forms a complex with S13 that binds strongly to the 16S ribosomal RNA. The chain is Small ribosomal subunit protein uS19c from Paulinella chromatophora.